Reading from the N-terminus, the 193-residue chain is ATP-dependent Clp protease proteolytic subunit 2 (193 aa).

The active-site Nucleophile is the S98. Residue H123 is part of the active site.

It belongs to the peptidase S14 family. As to quaternary structure, fourteen ClpP subunits assemble into 2 heptameric rings which stack back to back to give a disk-like structure with a central cavity, resembling the structure of eukaryotic proteasomes.

It localises to the cytoplasm. The catalysed reaction is Hydrolysis of proteins to small peptides in the presence of ATP and magnesium. alpha-casein is the usual test substrate. In the absence of ATP, only oligopeptides shorter than five residues are hydrolyzed (such as succinyl-Leu-Tyr-|-NHMec, and Leu-Tyr-Leu-|-Tyr-Trp, in which cleavage of the -Tyr-|-Leu- and -Tyr-|-Trp bonds also occurs).. Cleaves peptides in various proteins in a process that requires ATP hydrolysis. Has a chymotrypsin-like activity. Plays a major role in the degradation of misfolded proteins. This is ATP-dependent Clp protease proteolytic subunit 2 from Bacillus cereus (strain ATCC 14579 / DSM 31 / CCUG 7414 / JCM 2152 / NBRC 15305 / NCIMB 9373 / NCTC 2599 / NRRL B-3711).